The chain runs to 749 residues: MAHRKLESVGSGMLDHRVRPGPVPHSQEPESEDMELPLEGYVPEGLELAALRPESPAPEEQECHNHSPDGDSSSDYVNNTSEEEDYDEGLPEEEEGITYYIRYCPEDDSYLEGMDCNGEEYLAHSAHPVDTDECQEAVEEWTDSAGPHPHGHEAEGSQDYPDGQLPIPEDEPSVLEAHDQEEDGHYCASKEGYQDYYPEEANGNTGASPYRLRRGDGDLEDQEEDIDQIVAEIKMSLSMTSITSASEASPEHGPEPGPEDSVEACPPIKASCSPSRHEARPKSLNLLPEAKHPGDPQRGFKPKTRTPEERLKWPHEQVCNGLEQPRKQQRSDLNGPVDNNNIPETKKVASFPSFVAVPGPCEPEDLIDGIIFAANYLGSTQLLSERNPSKNIRMMQAQEAVSRVKRMQKAAKIKKKANSEGDAQTLTEVDLFISTQRIKVLNADTQETMMDHALRTISYIADIGNIVVLMARRRMPRSASQDCIETTPGAQEGKKQYKMICHVFESEDAQLIAQSIGQAFSVAYQEFLRANGINPEDLSQKEYSDIINTQEMYNDDLIHFSNSENCKELQLEKHKGEILGVVVVESGWGSILPTVILANMMNGGPAARSGKLSIGDQIMSINGTSLVGLPLATCQGIIKGLKNQTQVKLNIVSCPPVTTVLIKRPDLKYQLGFSVQNGIICSLMRGGIAERGGVRVGHRIIEINGQSVVATAHEKIVQALSNSVGEIHMKTMPAAMFRLLTGQETPLYI.

Disordered regions lie at residues 1–94 (MAHR…PEEE), 130–220 (DTDE…GDLE), and 238–344 (SMTS…NIPE). A Phosphoserine modification is found at S11. Residues 70-80 (GDSSSDYVNNT) show a composition bias toward polar residues. 2 stretches are compositionally biased toward acidic residues: residues 81 to 94 (SEEE…PEEE) and 131 to 142 (TDECQEAVEEWT). Positions 185-270 (HYCASKEGYQ…SVEACPPIKA (86 aa)) are STXBP1-binding. Position 208 is a phosphoserine (S208). Over residues 238 to 247 (SMTSITSASE) the composition is skewed to polar residues. The span at 305-315 (RTPEERLKWPH) shows a compositional bias: basic and acidic residues. A PID domain is found at 368 to 555 (DGIIFAANYL…IINTQEMYND (188 aa)). PDZ domains lie at 568–654 (ELQL…IVSC) and 659–734 (TVLI…TMPA).

In terms of assembly, part of a multimeric complex containing STXBP1 and syntaxin-1. Binds to the cytoplasmic domain of amyloid-beta protein, and to the nuclear factor NF-kappa-B/p65 via its PDZ domain. Interacts with the N-terminal domain of NECAB3. In terms of tissue distribution, brain.

Putative function in synaptic vesicle exocytosis by binding to STXBP1, an essential component of the synaptic vesicle exocytotic machinery. May modulate processing of the amyloid-beta precursor protein (APP) and hence formation of APP-beta. In Homo sapiens (Human), this protein is Amyloid-beta A4 precursor protein-binding family A member 2 (APBA2).